The primary structure comprises 413 residues: Histidinol-phosphate aminotransferase, chloroplastic (413 aa).

Residues M1–M35 constitute a chloroplast transit peptide. Position 273 is an N6-(pyridoxal phosphate)lysine (K273).

It belongs to the class-II pyridoxal-phosphate-dependent aminotransferase family. Histidinol-phosphate aminotransferase subfamily. In terms of assembly, homodimer. Pyridoxal 5'-phosphate is required as a cofactor. Mainly expressed in green tissues.

Its subcellular location is the plastid. It is found in the chloroplast. The catalysed reaction is L-histidinol phosphate + 2-oxoglutarate = 3-(imidazol-4-yl)-2-oxopropyl phosphate + L-glutamate. The protein operates within amino-acid biosynthesis; L-histidine biosynthesis; L-histidine from 5-phospho-alpha-D-ribose 1-diphosphate: step 7/9. The polypeptide is Histidinol-phosphate aminotransferase, chloroplastic (HPA) (Nicotiana tabacum (Common tobacco)).